Reading from the N-terminus, the 184-residue chain is ATP synthase subunit b, chloroplastic (184 aa).

A helical transmembrane segment spans residues 27 to 49 (LATNPINLSVVLGVLIFFGKGVL).

Belongs to the ATPase B chain family. F-type ATPases have 2 components, F(1) - the catalytic core - and F(0) - the membrane proton channel. F(1) has five subunits: alpha(3), beta(3), gamma(1), delta(1), epsilon(1). F(0) has four main subunits: a(1), b(1), b'(1) and c(10-14). The alpha and beta chains form an alternating ring which encloses part of the gamma chain. F(1) is attached to F(0) by a central stalk formed by the gamma and epsilon chains, while a peripheral stalk is formed by the delta, b and b' chains.

Its subcellular location is the plastid. The protein resides in the chloroplast thylakoid membrane. Functionally, f(1)F(0) ATP synthase produces ATP from ADP in the presence of a proton or sodium gradient. F-type ATPases consist of two structural domains, F(1) containing the extramembraneous catalytic core and F(0) containing the membrane proton channel, linked together by a central stalk and a peripheral stalk. During catalysis, ATP synthesis in the catalytic domain of F(1) is coupled via a rotary mechanism of the central stalk subunits to proton translocation. In terms of biological role, component of the F(0) channel, it forms part of the peripheral stalk, linking F(1) to F(0). This is ATP synthase subunit b, chloroplastic from Oenothera argillicola (Appalachian evening primrose).